Consider the following 380-residue polypeptide: Chaperone protein DnaJ (380 aa).

Residues 5 to 70 (DYYEILGVAK…QKRAAYDQYG (66 aa)) form the J domain. The segment at 135–213 (GVSKEIRIPT…CHGHGRVEKS (79 aa)) adopts a CR-type zinc-finger fold. The Zn(2+) site is built by cysteine 148, cysteine 151, cysteine 165, cysteine 168, cysteine 187, cysteine 190, cysteine 201, and cysteine 204. CXXCXGXG motif repeat units lie at residues 148-155 (CGVCHGSG), 165-172 (CSTCHGAG), 187-194 (CPTCHGRG), and 201-208 (CNACHGHG).

The protein belongs to the DnaJ family. Homodimer. It depends on Zn(2+) as a cofactor.

The protein localises to the cytoplasm. Functionally, participates actively in the response to hyperosmotic and heat shock by preventing the aggregation of stress-denatured proteins and by disaggregating proteins, also in an autonomous, DnaK-independent fashion. Unfolded proteins bind initially to DnaJ; upon interaction with the DnaJ-bound protein, DnaK hydrolyzes its bound ATP, resulting in the formation of a stable complex. GrpE releases ADP from DnaK; ATP binding to DnaK triggers the release of the substrate protein, thus completing the reaction cycle. Several rounds of ATP-dependent interactions between DnaJ, DnaK and GrpE are required for fully efficient folding. Also involved, together with DnaK and GrpE, in the DNA replication of plasmids through activation of initiation proteins. The protein is Chaperone protein DnaJ of Erwinia tasmaniensis (strain DSM 17950 / CFBP 7177 / CIP 109463 / NCPPB 4357 / Et1/99).